Reading from the N-terminus, the 902-residue chain is Glutamate receptor 4 (902 aa).

The N-terminal stretch at 1–20 (MRIISRQIVLLFSGFWGLAM) is a signal peptide. The Extracellular portion of the chain corresponds to 22-544 (AFPSSVQIGG…GVFSFLDPLA (523 aa)). 6 N-linked (GlcNAc...) asparagine glycosylation sites follow: Asn-52, Asn-56, Asn-258, Asn-371, Asn-407, and Asn-414. Residues Cys-84 and Cys-331 are joined by a disulfide bond. Pro-500, Thr-502, and Arg-507 together coordinate L-glutamate. The chain crosses the membrane as a helical span at residues 545–565 (YEIWMCIVFAYIGVSVVLFLV). Residues 566–592 (SRFSPYEWHTEEPEDGKEGPSDQPPNE) are Cytoplasmic-facing. An intramembrane region (helical; Pore-forming) is located at residues 593 to 608 (FGIFNSLWFSLGAFMQ). Residues 609 to 611 (QGC) lie within the membrane without spanning it. Cys-611 carries S-palmitoyl cysteine lipidation. Residues 612 to 617 (DISPRS) are Cytoplasmic-facing. Residues 618–638 (LSGRIVGGVWWFFTLIIISSY) traverse the membrane as a helical segment. The Extracellular portion of the chain corresponds to 639 to 813 (TANLAAFLTV…DKTSALSLSN (175 aa)). Positions 676, 677, and 727 each coordinate L-glutamate. The cysteines at positions 740 and 795 are disulfide-linked. The helical transmembrane segment at 814-834 (VAGVFYILVGGLGLAMLVALI) threads the bilayer. Residues 835 to 902 (EFCYKSRAEA…GLAVIASDLP (68 aa)) are Cytoplasmic-facing. The S-palmitoyl cysteine moiety is linked to residue Cys-837. Phosphoserine; by PKC/PRKCG is present on Ser-862.

The protein belongs to the glutamate-gated ion channel (TC 1.A.10.1) family. GRIA4 subfamily. Homotetramer or heterotetramer of pore-forming glutamate receptor subunits. Tetramers may be formed by the dimerization of dimers. Interacts with EPB41L1 via its C-terminus. Isoform 3 interacts with PICK1. Found in a complex with GRIA1, GRIA2, GRIA3, CNIH2, CNIH3, CACNG2, CACNG3, CACNG4, CACNG5, CACNG7 and CACNG8. Interacts with CACNG5 and PRKCG. Found in a complex with GRIA1, GRIA2, GRIA3, DLG4, CACNG8 and CNIH2. Palmitoylated. Depalmitoylated upon L-glutamate stimulation. ZDHHC3/GODZ specifically palmitoylates Cys-611, which leads to Golgi retention and decreased cell surface expression. In contrast, Cys-837 palmitoylation does not affect cell surface expression but regulates stimulation-dependent endocytosis. In terms of processing, phosphorylated at Ser-862 by PRKCG; phosphorylation increases plasma membrane-associated GRI4 expression.

The protein resides in the cell membrane. It localises to the postsynaptic cell membrane. The protein localises to the cell projection. Its subcellular location is the dendrite. The catalysed reaction is Ca(2+)(in) = Ca(2+)(out). The enzyme catalyses Na(+)(in) = Na(+)(out). It catalyses the reaction Mg(2+)(in) = Mg(2+)(out). In terms of biological role, ionotropic glutamate receptor that functions as a ligand-gated cation channel, gated by L-glutamate and glutamatergic agonists such as alpha-amino-3-hydroxy-5-methyl-4-isoxazolepropionic acid (AMPA), quisqualic acid, and kainic acid. L-glutamate acts as an excitatory neurotransmitter at many synapses in the central nervous system and plays an important role in fast excitatory synaptic transmission. Binding of the excitatory neurotransmitter L-glutamate induces a conformation change, leading to the opening of the cation channel, and thereby converts the chemical signal to an electrical impulse upon entry of monovalent and divalent cations such as sodium and calcium. The receptor then desensitizes rapidly and enters a transient inactive state, characterized by the presence of bound agonist. In the presence of CACNG8, shows resensitization which is characterized by a delayed accumulation of current flux upon continued application of L-glutamate. The chain is Glutamate receptor 4 from Macaca fascicularis (Crab-eating macaque).